Reading from the N-terminus, the 428-residue chain is Tol-Pal system protein TolB (428 aa).

Residues 1–23 form the signal peptide; it reads MRRLYQTVCTLALLLVGLQAAHA.

This sequence belongs to the TolB family. In terms of assembly, the Tol-Pal system is composed of five core proteins: the inner membrane proteins TolA, TolQ and TolR, the periplasmic protein TolB and the outer membrane protein Pal. They form a network linking the inner and outer membranes and the peptidoglycan layer.

It localises to the periplasm. In terms of biological role, part of the Tol-Pal system, which plays a role in outer membrane invagination during cell division and is important for maintaining outer membrane integrity. This chain is Tol-Pal system protein TolB, found in Alkalilimnicola ehrlichii (strain ATCC BAA-1101 / DSM 17681 / MLHE-1).